The chain runs to 339 residues: Protein FAM131B (339 aa).

A disordered region spans residues 1-22 (MDSTSSLHGSSLHRPSTEQTRT). Phosphoserine is present on residues Ser-47, Ser-114, and Ser-117. Positions 222 to 339 (GPAFGDSQPS…PLLTQPSTPA (118 aa)) are disordered. 2 stretches are compositionally biased toward polar residues: residues 239–250 (QPASGYSAQEPS) and 324–339 (PTTS…STPA). Thr-325 is subject to Phosphothreonine. Residue Ser-327 is modified to Phosphoserine.

It belongs to the FAM131 family.

The chain is Protein FAM131B (FAM131B) from Bos taurus (Bovine).